A 79-amino-acid chain; its full sequence is Conotoxin Cl9.4 (79 aa).

The first 23 residues, 1–23 (MNCYLILTVALLLTSAMTGTTTA), serve as a signal peptide directing secretion. Residues 24 to 37 (GQLNKKGVTLREDD) constitute a propeptide that is removed on maturation. Cystine bridges form between Cys41–Cys58, Cys46–Cys68, and Cys48–Cys73.

In terms of tissue distribution, expressed by the venom duct.

It localises to the secreted. The polypeptide is Conotoxin Cl9.4 (Californiconus californicus (California cone)).